We begin with the raw amino-acid sequence, 103 residues long: Small ribosomal subunit protein uS14c (103 aa).

The disordered stretch occupies residues 27–56; sequence SKKKIRSKVSPLSLSEKTKMQEKLQSLPRN.

This sequence belongs to the universal ribosomal protein uS14 family. In terms of assembly, part of the 30S ribosomal subunit.

Its subcellular location is the plastid. It is found in the chloroplast. Its function is as follows. Binds 16S rRNA, required for the assembly of 30S particles. In Zea mays (Maize), this protein is Small ribosomal subunit protein uS14c.